A 720-amino-acid polypeptide reads, in one-letter code: NADH-ubiquinone oxidoreductase 78 kDa subunit, mitochondrial (720 aa).

A mitochondrion-targeting transit peptide spans 1–23 (MNSIKSHILRSSKRYISASSKRL). Positions 24-102 (AEVEVTVDGR…GMVVHTDSER (79 aa)) constitute a 2Fe-2S ferredoxin-type domain. Residues Cys58, Cys69, Cys72, and Cys86 each coordinate [2Fe-2S] cluster. The 4Fe-4S His(Cys)3-ligated-type domain maps to 102–141 (RIKKAREGVTEMLLENHPLDCPVCDQGGECDLQEQSQRYG). Residues 241-297 (LKRTETIDVLDAVGSNIRVDTRGIEVMRVLPRLNDDVNEEWISDKTRFACDGLKTQR) form the 4Fe-4S Mo/W bis-MGD-type domain.

It belongs to the complex I 75 kDa subunit family. As to quaternary structure, core subunit of respiratory chain NADH dehydrogenase (Complex I) which is composed of 45 different subunits. This is the largest subunit of complex I and it is a component of the iron-sulfur (IP) fragment of the enzyme. It depends on [2Fe-2S] cluster as a cofactor. [4Fe-4S] cluster serves as cofactor.

Its subcellular location is the mitochondrion. It catalyses the reaction a ubiquinone + NADH + 5 H(+)(in) = a ubiquinol + NAD(+) + 4 H(+)(out). Core subunit of the mitochondrial membrane respiratory chain NADH dehydrogenase (Complex I) which catalyzes electron transfer from NADH through the respiratory chain, using ubiquinone as an electron acceptor. Essential for catalysing the entry and efficient transfer of electrons within complex I. Plays a key role in the assembly and stability of complex I and participates in the association of complex I with ubiquinol-cytochrome reductase complex (Complex III) to form supercomplexes. Plays a role in cell wall integrity and is involved in osmotic and oxidative resistance, yeast to hypha transition, and the ability to damage and invade oral epithelial cells. The protein is NADH-ubiquinone oxidoreductase 78 kDa subunit, mitochondrial of Candida albicans (strain SC5314 / ATCC MYA-2876) (Yeast).